Reading from the N-terminus, the 180-residue chain is MEQYRGTTIVSVRRGNNVVIGGDGQVSLGNTVMKGNARKVRRLFHGKVIAGFAGGTADAFTLFERFEAQLEKHQGHLVRAAVELAKDWRTDRALRRLEALLAVADKESSLIITGNGDVIEPEKDGLIAIGSGGPFAQSAATALLDNTDLPARDIVAKALTIAGDICIYTNHNHTFEELDG.

The active site involves T7. Na(+) is bound by residues G163, C166, and T169.

It belongs to the peptidase T1B family. HslV subfamily. As to quaternary structure, a double ring-shaped homohexamer of HslV is capped on each side by a ring-shaped HslU homohexamer. The assembly of the HslU/HslV complex is dependent on binding of ATP.

It localises to the cytoplasm. The catalysed reaction is ATP-dependent cleavage of peptide bonds with broad specificity.. Its activity is regulated as follows. Allosterically activated by HslU binding. Functionally, protease subunit of a proteasome-like degradation complex believed to be a general protein degrading machinery. This Alcanivorax borkumensis (strain ATCC 700651 / DSM 11573 / NCIMB 13689 / SK2) protein is ATP-dependent protease subunit HslV.